A 56-amino-acid chain; its full sequence is Small ribosomal subunit protein bS21 (56 aa).

Belongs to the bacterial ribosomal protein bS21 family.

This is Small ribosomal subunit protein bS21 from Dictyoglomus thermophilum (strain ATCC 35947 / DSM 3960 / H-6-12).